Here is a 404-residue protein sequence, read N- to C-terminus: Phosphopentomutase (404 aa).

Mn(2+)-binding residues include Asp-10, Asp-303, His-308, Asp-344, His-345, and His-356.

It belongs to the phosphopentomutase family. It depends on Mn(2+) as a cofactor.

Its subcellular location is the cytoplasm. It catalyses the reaction 2-deoxy-alpha-D-ribose 1-phosphate = 2-deoxy-D-ribose 5-phosphate. The enzyme catalyses alpha-D-ribose 1-phosphate = D-ribose 5-phosphate. It functions in the pathway carbohydrate degradation; 2-deoxy-D-ribose 1-phosphate degradation; D-glyceraldehyde 3-phosphate and acetaldehyde from 2-deoxy-alpha-D-ribose 1-phosphate: step 1/2. Its function is as follows. Isomerase that catalyzes the conversion of deoxy-ribose 1-phosphate (dRib-1-P) and ribose 1-phosphate (Rib-1-P) to deoxy-ribose 5-phosphate (dRib-5-P) and ribose 5-phosphate (Rib-5-P), respectively. The chain is Phosphopentomutase from Shewanella putrefaciens (strain CN-32 / ATCC BAA-453).